A 264-amino-acid polypeptide reads, in one-letter code: Hydroxyethylthiazole kinase (264 aa).

Methionine 52 contacts substrate. Residues arginine 127 and threonine 173 each coordinate ATP. Glycine 200 contributes to the substrate binding site.

The protein belongs to the Thz kinase family. It depends on Mg(2+) as a cofactor.

The enzyme catalyses 5-(2-hydroxyethyl)-4-methylthiazole + ATP = 4-methyl-5-(2-phosphooxyethyl)-thiazole + ADP + H(+). The protein operates within cofactor biosynthesis; thiamine diphosphate biosynthesis; 4-methyl-5-(2-phosphoethyl)-thiazole from 5-(2-hydroxyethyl)-4-methylthiazole: step 1/1. Functionally, catalyzes the phosphorylation of the hydroxyl group of 4-methyl-5-beta-hydroxyethylthiazole (THZ). This Pectobacterium atrosepticum (strain SCRI 1043 / ATCC BAA-672) (Erwinia carotovora subsp. atroseptica) protein is Hydroxyethylthiazole kinase.